A 288-amino-acid polypeptide reads, in one-letter code: Phosphatidylserine decarboxylase proenzyme (288 aa).

Catalysis depends on charge relay system; for autoendoproteolytic cleavage activity residues Asp91, His148, and Ser254. Ser254 (schiff-base intermediate with substrate; via pyruvic acid; for decarboxylase activity) is an active-site residue. At Ser254 the chain carries Pyruvic acid (Ser); by autocatalysis.

This sequence belongs to the phosphatidylserine decarboxylase family. PSD-B subfamily. Prokaryotic type I sub-subfamily. Heterodimer of a large membrane-associated beta subunit and a small pyruvoyl-containing alpha subunit. It depends on pyruvate as a cofactor. In terms of processing, is synthesized initially as an inactive proenzyme. Formation of the active enzyme involves a self-maturation process in which the active site pyruvoyl group is generated from an internal serine residue via an autocatalytic post-translational modification. Two non-identical subunits are generated from the proenzyme in this reaction, and the pyruvate is formed at the N-terminus of the alpha chain, which is derived from the carboxyl end of the proenzyme. The autoendoproteolytic cleavage occurs by a canonical serine protease mechanism, in which the side chain hydroxyl group of the serine supplies its oxygen atom to form the C-terminus of the beta chain, while the remainder of the serine residue undergoes an oxidative deamination to produce ammonia and the pyruvoyl prosthetic group on the alpha chain. During this reaction, the Ser that is part of the protease active site of the proenzyme becomes the pyruvoyl prosthetic group, which constitutes an essential element of the active site of the mature decarboxylase.

It is found in the cell membrane. The catalysed reaction is a 1,2-diacyl-sn-glycero-3-phospho-L-serine + H(+) = a 1,2-diacyl-sn-glycero-3-phosphoethanolamine + CO2. Its pathway is phospholipid metabolism; phosphatidylethanolamine biosynthesis; phosphatidylethanolamine from CDP-diacylglycerol: step 2/2. Catalyzes the formation of phosphatidylethanolamine (PtdEtn) from phosphatidylserine (PtdSer). The polypeptide is Phosphatidylserine decarboxylase proenzyme (Pseudoalteromonas translucida (strain TAC 125)).